A 70-amino-acid chain; its full sequence is MIFKVFYQEKLTEVPVRENTKVLYLEATSQKDVRKKLNKFAYNIEFVQSVTGAHLEYEKQNADLILAEIV.

Belongs to the RNA polymerase subunit epsilon family. RNAP is composed of a core of 2 alpha, a beta and a beta' subunit. The core is associated with a delta subunit, and at least one of epsilon or omega. When a sigma factor is associated with the core the holoenzyme is formed, which can initiate transcription.

The enzyme catalyses RNA(n) + a ribonucleoside 5'-triphosphate = RNA(n+1) + diphosphate. Its function is as follows. A non-essential component of RNA polymerase (RNAP). The protein is DNA-directed RNA polymerase subunit epsilon of Bacillus mycoides (strain KBAB4) (Bacillus weihenstephanensis).